The following is a 320-amino-acid chain: Olfactory receptor 52N1 (320 aa).

Residues 1-27 (MSFLNGTSLTPASFILNGIPGLEDVHL) lie on the Extracellular side of the membrane. N5 is a glycosylation site (N-linked (GlcNAc...) asparagine). The helical transmembrane segment at 28–48 (WISFPLCTMYSIAITGNFGLM) threads the bilayer. Residues 49 to 56 (YLIYCDEA) are Cytoplasmic-facing. A helical membrane pass occupies residues 57 to 77 (LHRPMYVFLALLSFTDVLMCT). Residues 78–101 (STLPNTLFILWFNLKEIDFKACLA) are Extracellular-facing. C99 and C191 are disulfide-bonded. The helical transmembrane segment at 102-122 (QMFFVHTFTGMESGVLMLMAL) threads the bilayer. Residues 123-141 (DHCVAICFPLRYATILTNS) lie on the Cytoplasmic side of the membrane. A helical membrane pass occupies residues 142–162 (VIAKAGFLTFLRGVMLVIPST). Topologically, residues 163–198 (FLTKRLPYCKGNVIPHTYCDHMSVAKISCGNVRVNA) are extracellular. The helical transmembrane segment at 199–219 (IYGLIVALLIGGFDILCITIS) threads the bilayer. Topologically, residues 220–239 (YTMILQAVVSLSSADARQKA) are cytoplasmic. Residues 240-260 (FSTCTAHFCAIVLTYVPAFFT) traverse the membrane as a helical segment. Over 261–276 (FFTHHFGGHTIPLHIH) the chain is Extracellular. The helical transmembrane segment at 277–297 (IIMANLYLLMPPTMNPIVYGV) threads the bilayer. Residues 298 to 320 (KTRQVRESVIRFFLKGKDNSHNF) are Cytoplasmic-facing.

Belongs to the G-protein coupled receptor 1 family.

It localises to the cell membrane. Its function is as follows. Odorant receptor. This chain is Olfactory receptor 52N1 (OR52N1), found in Homo sapiens (Human).